We begin with the raw amino-acid sequence, 310 residues long: tRNA dimethylallyltransferase (310 aa).

Gly14–Ser21 lines the ATP pocket. Thr16–Ser21 is a binding site for substrate. Interaction with substrate tRNA regions lie at residues Asp39–Gln42 and Gln163–Arg167.

Belongs to the IPP transferase family. Monomer. The cofactor is Mg(2+).

The enzyme catalyses adenosine(37) in tRNA + dimethylallyl diphosphate = N(6)-dimethylallyladenosine(37) in tRNA + diphosphate. Its function is as follows. Catalyzes the transfer of a dimethylallyl group onto the adenine at position 37 in tRNAs that read codons beginning with uridine, leading to the formation of N6-(dimethylallyl)adenosine (i(6)A). This Brucella suis biovar 1 (strain 1330) protein is tRNA dimethylallyltransferase.